Reading from the N-terminus, the 426-residue chain is Glutamate-1-semialdehyde 2,1-aminomutase (426 aa).

Position 265 is an N6-(pyridoxal phosphate)lysine (Lys-265).

This sequence belongs to the class-III pyridoxal-phosphate-dependent aminotransferase family. HemL subfamily. In terms of assembly, homodimer. Pyridoxal 5'-phosphate is required as a cofactor.

The protein resides in the cytoplasm. It carries out the reaction (S)-4-amino-5-oxopentanoate = 5-aminolevulinate. It functions in the pathway porphyrin-containing compound metabolism; protoporphyrin-IX biosynthesis; 5-aminolevulinate from L-glutamyl-tRNA(Glu): step 2/2. In Pectobacterium atrosepticum (strain SCRI 1043 / ATCC BAA-672) (Erwinia carotovora subsp. atroseptica), this protein is Glutamate-1-semialdehyde 2,1-aminomutase.